A 346-amino-acid chain; its full sequence is Uroporphyrinogen decarboxylase (346 aa).

Substrate is bound by residues 21 to 25 (RQAGR), Asp71, Tyr146, Ser201, and His316.

Belongs to the uroporphyrinogen decarboxylase family. In terms of assembly, homodimer.

It is found in the cytoplasm. The enzyme catalyses uroporphyrinogen III + 4 H(+) = coproporphyrinogen III + 4 CO2. It functions in the pathway porphyrin-containing compound metabolism; protoporphyrin-IX biosynthesis; coproporphyrinogen-III from 5-aminolevulinate: step 4/4. Catalyzes the decarboxylation of four acetate groups of uroporphyrinogen-III to yield coproporphyrinogen-III. This Rickettsia rickettsii (strain Iowa) protein is Uroporphyrinogen decarboxylase.